The primary structure comprises 221 residues: Protein-disulfide oxidoreductase DsbI (221 aa).

Residues 27 to 47 (FLWLLMAVAMGGLIILAHSFF) traverse the membrane as a helical segment. Cys56 and Cys59 are oxidised to a cystine. The next 2 helical transmembrane spans lie at 64–84 (FAMF…KNII) and 85–105 (LKLI…KFSV). Cys128 and Cys154 form a disulfide bridge. A helical transmembrane segment spans residues 189–209 (LAFYEYGAGVPAGVWAMFCTV).

Belongs to the DsbB family. DsbI subfamily. In terms of assembly, interacts with DsbL.

It is found in the cell inner membrane. Required for disulfide bond formation in some proteins. Part of a redox system composed of DsbI and DsbL that mediates formation of an essential disulfide bond in AssT. The chain is Protein-disulfide oxidoreductase DsbI from Lelliottia amnigena (Enterobacter amnigenus).